A 555-amino-acid polypeptide reads, in one-letter code: Disabled homolog 1 (555 aa).

Residues 1 to 26 (MSTETELQVAVKTSAKKDSRKKGQDR) are disordered. The span at 15 to 26 (AKKDSRKKGQDR) shows a compositional bias: basic and acidic residues. The region spanning 36-189 (KGEGVRYKAK…CEQAVYQTIL (154 aa)) is the PID domain. 3 positions are modified to phosphotyrosine: tyrosine 198, tyrosine 220, and tyrosine 232. Disordered regions lie at residues 386-409 (PLATVPGTNDSARSSPQSDKPRQK) and 469-555 (LTPV…QDGS). Polar residues predominate over residues 391–403 (PGTNDSARSSPQS). Composition is skewed to low complexity over residues 470–479 (TPVTSTTPST) and 490–501 (SSPSKSSASHVS). A Phosphoserine; by CDK5 modification is found at serine 491. Acidic residues predominate over residues 504–513 (TADDIFEEGF).

As to quaternary structure, associates with the SH2 domains of SRC, FYN and ABL. Interacts (phosphorylated on tyrosine residues) with CRK and CRKL (via respective SH2 domain). Interacts with SIAH1, LRP8 and VLDLR. Interacts with LRP1. Interacts with APLP1 (via NPXY motif). Interacts with DAB2IP. Interacts with ZSWIM8. In terms of processing, phosphorylated by FYN on Tyr-198 and Tyr-220 upon reelin induction in embryonic neurons. Also phosphorylated on Ser-491 independently of reelin signaling. Ubiquitinated by various cullin-5-RING E3 ubiquitin-protein ligase complexes (ECS complexes) following ligand-binding and phosphorylation, leading to its degradation. Ubiquitinated by the ECS(SOCS7) complex in the cortical plate of the developing cerebral cortex following ligand-binding and phosphorylation by FYN, leading to its degradation by the proteasome. Recognized by ZSWIM8 through a disorder targets misorder mechanism that eliminates misfolded DAB1 via ubiquitination and proteasomal degradation.

Its subcellular location is the cytoplasm. In terms of biological role, signaling adapter of the reelin-mediated signaling pathway, which regulates the migration and differentiation of postmitotic neurons during brain development. Mediates intracellular transduction of Reelin signaling following reelin (RELN)-binding to its receptor: acts by docking proteins through its phosphotyrosine residues and PID domain. This chain is Disabled homolog 1 (Dab1), found in Rattus norvegicus (Rat).